Here is a 389-residue protein sequence, read N- to C-terminus: Succinate--CoA ligase [ADP-forming] subunit beta (389 aa).

Residues 9 to 236 (RDMFEAHGVP…KDAADPLEAK (228 aa)) form the ATP-grasp domain. ATP-binding positions include lysine 45, 52-54 (GRG), alanine 94, and glutamate 99. Residues asparagine 191 and aspartate 205 each contribute to the Mg(2+) site. Substrate is bound by residues asparagine 256 and 318–320 (GIT).

The protein belongs to the succinate/malate CoA ligase beta subunit family. In terms of assembly, heterotetramer of two alpha and two beta subunits. Requires Mg(2+) as cofactor.

The catalysed reaction is succinate + ATP + CoA = succinyl-CoA + ADP + phosphate. It carries out the reaction GTP + succinate + CoA = succinyl-CoA + GDP + phosphate. The protein operates within carbohydrate metabolism; tricarboxylic acid cycle; succinate from succinyl-CoA (ligase route): step 1/1. Its function is as follows. Succinyl-CoA synthetase functions in the citric acid cycle (TCA), coupling the hydrolysis of succinyl-CoA to the synthesis of either ATP or GTP and thus represents the only step of substrate-level phosphorylation in the TCA. The beta subunit provides nucleotide specificity of the enzyme and binds the substrate succinate, while the binding sites for coenzyme A and phosphate are found in the alpha subunit. This Pseudarthrobacter chlorophenolicus (strain ATCC 700700 / DSM 12829 / CIP 107037 / JCM 12360 / KCTC 9906 / NCIMB 13794 / A6) (Arthrobacter chlorophenolicus) protein is Succinate--CoA ligase [ADP-forming] subunit beta.